Reading from the N-terminus, the 494-residue chain is MFKFTFALALCVLAAGLVLAQHNPHWWGNRNTIVHLFEWKWEDIAEECENFLGPRGFAGVQVSPANENIVSPGRPWWERYQPISYKLITRSGNEEQFADMVRRCNEVGVRIYVDVLLNHMSADFVGQAVGTAGTEADPAVKSFPGVPYSAEDFHPSCEIYDWNDRYQIQHCELVGLKDLDQSRDWVRTKLIEFLDHLIELGVAGFRVDAAKHMASEDLEFIYGSLSDLKIEHGFPHSSRPFIFQEVIDHGGQEVTREEYNSLGAVTEFRFSQEIGNAFRGNNALKWLQSWGTDWGFLSSGQALTFVDNHDNQRDGGAVLTYKSPRQYKMATAFHLAYPYGISRVMSSFAFDDHDSAPPQDAQEELISPEFDADGGCANGWICEHRWRQIYNMVGFKNAVRDTEISNWWDNGDSQIAFCRGSKGFIAFNNNMYNLAEVLQTCLPKGVYCDVISGDLINGSCSGKSVYVGDDGLGFVSIDSDDFDGVLAIHVDARI.

Residues 1 to 20 (MFKFTFALALCVLAAGLVLA) form the signal peptide. Position 21 is a pyrrolidone carboxylic acid (Gln21). Cysteines 48 and 104 form a disulfide. Residues Asn118, Gln169, and Asp178 each contribute to the Ca(2+) site. Cysteines 157 and 171 form a disulfide. Arg206 is a binding site for chloride. Asp208 functions as the Nucleophile in the catalytic mechanism. His212 is a Ca(2+) binding site. Glu245 functions as the Proton donor in the catalytic mechanism. Chloride is bound by residues Asn308 and Arg343. Cystine bridges form between Cys376-Cys382, Cys418-Cys441, and Cys448-Cys460.

It belongs to the glycosyl hydrolase 13 family. As to quaternary structure, monomer. The cofactor is Ca(2+). Chloride is required as a cofactor.

The protein resides in the secreted. It catalyses the reaction Endohydrolysis of (1-&gt;4)-alpha-D-glucosidic linkages in polysaccharides containing three or more (1-&gt;4)-alpha-linked D-glucose units.. The sequence is that of Alpha-amylase-related protein (Amyrel) from Drosophila pseudoobscura pseudoobscura (Fruit fly).